The primary structure comprises 1648 residues: Cortactin-binding protein 2 (1648 aa).

Disordered regions lie at residues 1–26 (MATD…TAEA), 200–250 (EEKK…EEAH), 322–439 (PLTV…PGLN), 451–476 (GNAN…PTSR), and 492–608 (ALSR…PSID). Positions 119–274 (KMQERMSAQL…MEQMKKGSDG (156 aa)) form a coiled coil. Basic and acidic residues-rich tracts occupy residues 200–218 (EEKK…EKQR) and 225–250 (QLEK…EEAH). Composition is skewed to polar residues over residues 330–342 (STGS…NTKG) and 372–392 (LPSS…APDL). Over residues 393–415 (SNSTPSTPSSTAPAAAQTPGTAP) the composition is skewed to low complexity. The segment covering 492-503 (ALSRFTSPQAGA) has biased composition (polar residues). R495 bears the Asymmetric dimethylarginine mark. 6 ANK repeats span residues 699-729 (GRPT…DINY), 733-762 (DGHS…RVDA), 766-795 (NGFT…NINH), 799-828 (GGQT…DRSI), 832-861 (DGWT…RAHG), and 901-931 (EGWT…EPER). Residues 1438–1492 (SGAWRKVNTSPRKKPGHFSSPTWNKPDPKREGMRNKTIPHLNTNRNSSLSKQQSL) form a disordered region. Residues 1477–1492 (HLNTNRNSSLSKQQSL) are compositionally biased toward polar residues. S1510 is modified (phosphoserine). The segment at 1522–1648 (SMCSSKSESD…KHEQVEKPNK (127 aa)) is disordered. Residues 1528–1547 (SESDISKIADSRDDLRKFDS) show a composition bias toward basic and acidic residues. 2 stretches are compositionally biased toward polar residues: residues 1548 to 1557 (SRTNPGTSAP) and 1571 to 1584 (PPSS…SNSK). A compositionally biased stretch (low complexity) spans 1609–1623 (SQNTKRNSSSSNTRQ). Over residues 1630-1648 (SKEENWTLDKHEQVEKPNK) the composition is skewed to basic and acidic residues.

As to quaternary structure, interacts with CTTN/cortactin SH3 domain. Interacts with STRN, STRN4/zinedin and MOB4/phocein; this interactions mediate the association with the STRIPAK core complex and may regulate dendritic spine distribution of the STRIPAK complex in hippocampal neurons. Activation of glutamate receptors weakens the interaction with STRN and STRN4. Isoform 2 is predominantly expressed in brain (at protein level). In the brain, expressed at high levels in hypothalamus and striatum and at lower levels in cerebellum and cortex.

The protein localises to the cytoplasm. Its subcellular location is the cell cortex. It is found in the cell projection. The protein resides in the dendritic spine. In terms of biological role, regulates the dendritic spine distribution of CTTN/cortactin in hippocampal neurons, and thus controls dendritic spinogenesis and dendritic spine maintenance. Associates with the striatin-interacting phosphatase and kinase (STRIPAK) core complex to regulate dendritic spine distribution of the STRIPAK complex in hippocampal neurons. This Mus musculus (Mouse) protein is Cortactin-binding protein 2 (Cttnbp2).